An 852-amino-acid polypeptide reads, in one-letter code: Zinc finger protein 484 (852 aa).

The region spanning 8–78 (VSFKDVTVDF…DGEIPSQSRP (71 aa)) is the KRAB domain. K156 is covalently cross-linked (Glycyl lysine isopeptide (Lys-Gly) (interchain with G-Cter in SUMO2)). The C2H2-type 1; degenerate zinc finger occupies 223-245 (CECNQCGKPLHHKQALIQQQKIH). The C2H2-type 2; degenerate zinc finger occupies 279–301 (HECHECEAVFTQKSQLDGSQRVY). The C2H2-type 3; degenerate zinc finger occupies 328–350 (YKCSDYGRAFIQKSDLFRCQRIH). The C2H2-type 4; degenerate zinc-finger motif lies at 356–378 (YEYSECEKNLPQNSNLNIHKKIH). C2H2-type zinc fingers lie at residues 384-406 (FECT…QKIH), 412-434 (YVCT…ERIH), 440-462 (YECS…QRIH), 468-490 (FICS…QKIH), 496-518 (YICT…QKIH), 524-546 (YKCS…QKCH), 552-574 (YECS…QRIH), 580-602 (YVCT…ERIH), 608-630 (YECS…QQIH), 636-658 (YRCA…QKIH), 664-686 (YKCS…QQSH), 692-714 (YECS…QRIH), 720-742 (YICN…RRIH), 748-770 (YECS…HRIH), and 776-798 (YICA…QKIH). K816 is covalently cross-linked (Glycyl lysine isopeptide (Lys-Gly) (interchain with G-Cter in SUMO2)).

It belongs to the krueppel C2H2-type zinc-finger protein family.

The protein localises to the nucleus. Its function is as follows. May be involved in transcriptional regulation. The sequence is that of Zinc finger protein 484 (ZNF484) from Homo sapiens (Human).